A 179-amino-acid polypeptide reads, in one-letter code: Large ribosomal subunit protein uL5 (179 aa).

It belongs to the universal ribosomal protein uL5 family. Part of the 50S ribosomal subunit; part of the 5S rRNA/L5/L18/L25 subcomplex. Contacts the 5S rRNA and the P site tRNA. Forms a bridge to the 30S subunit in the 70S ribosome.

In terms of biological role, this is one of the proteins that bind and probably mediate the attachment of the 5S RNA into the large ribosomal subunit, where it forms part of the central protuberance. In the 70S ribosome it contacts protein S13 of the 30S subunit (bridge B1b), connecting the 2 subunits; this bridge is implicated in subunit movement. Contacts the P site tRNA; the 5S rRNA and some of its associated proteins might help stabilize positioning of ribosome-bound tRNAs. This chain is Large ribosomal subunit protein uL5, found in Nitrosomonas europaea (strain ATCC 19718 / CIP 103999 / KCTC 2705 / NBRC 14298).